The primary structure comprises 294 residues: 4-hydroxy-tetrahydrodipicolinate synthase (294 aa).

Residue threonine 47 coordinates pyruvate. Tyrosine 135 serves as the catalytic Proton donor/acceptor. Lysine 164 functions as the Schiff-base intermediate with substrate in the catalytic mechanism. Valine 206 contributes to the pyruvate binding site.

The protein belongs to the DapA family. In terms of assembly, homotetramer; dimer of dimers.

The protein resides in the cytoplasm. It catalyses the reaction L-aspartate 4-semialdehyde + pyruvate = (2S,4S)-4-hydroxy-2,3,4,5-tetrahydrodipicolinate + H2O + H(+). It functions in the pathway amino-acid biosynthesis; L-lysine biosynthesis via DAP pathway; (S)-tetrahydrodipicolinate from L-aspartate: step 3/4. In terms of biological role, catalyzes the condensation of (S)-aspartate-beta-semialdehyde [(S)-ASA] and pyruvate to 4-hydroxy-tetrahydrodipicolinate (HTPA). This is 4-hydroxy-tetrahydrodipicolinate synthase from Lachnoclostridium phytofermentans (strain ATCC 700394 / DSM 18823 / ISDg) (Clostridium phytofermentans).